Here is a 1274-residue protein sequence, read N- to C-terminus: DENN domain-containing protein 5B (1274 aa).

An N-acetylserine modification is found at Ser2. In terms of domain architecture, uDENN spans 39-244 (DELAGENFDQ…EVPLPPPGRS (206 aa)). A phosphoserine mark is found at Ser49 and Ser178. The 137-residue stretch at 263-399 (ELPLSDYPLR…VDFIQELSEV (137 aa)) folds into the cDENN domain. One can recognise a dDENN domain in the interval 401–581 (VQFGIPPEGS…DNKIMSQWEE (181 aa)). The region spanning 772–932 (LEENTLIASL…DYFCFTSVFT (161 aa)) is the RUN 1 domain. Position 822 is a phosphoserine (Ser822). The helical transmembrane segment at 916–936 (LLSLNAVDYFCFTSVFTTIMI) threads the bilayer. The PLAT domain maps to 936 to 1044 (IPYRSVIIPI…DDGSLERILI (109 aa)). A Phosphothreonine modification is found at Thr1062. 3 positions are modified to phosphoserine: Ser1068, Ser1076, and Ser1079. One can recognise an RUN 2 domain in the interval 1118–1267 (TVLLCGENGL…QDFTIVLEGS (150 aa)).

This sequence belongs to the RAB6IP1 family.

It localises to the membrane. In terms of biological role, guanine nucleotide exchange factor (GEF) which may activate RAB39A and/or RAB39B. Promotes the exchange of GDP to GTP, converting inactive GDP-bound Rab proteins into their active GTP-bound form. This is DENN domain-containing protein 5B (DENND5B) from Homo sapiens (Human).